A 468-amino-acid polypeptide reads, in one-letter code: Procollagen C-endopeptidase enhancer 1 (468 aa).

The first 24 residues, 1-24, serve as a signal peptide directing secretion; sequence MLPAALTSLLGPFLLAWVLPLARG. A glycan (N-linked (GlcNAc...) asparagine) is linked at Asn28. Intrachain disulfides connect Cys36/Cys62, Cys89/Cys111, Cys158/Cys185, and Cys212/Cys235. CUB domains lie at 36-148 and 158-272; these read CGGD…YSGR and CGGR…YRTL. At Thr41 the chain carries Phosphothreonine. Ser49 carries the post-translational modification Phosphoserine. The interval 271–341 is disordered; the sequence is TLPRDAVEKE…VAPDAPSITC (71 aa). Over residues 272–281 the composition is skewed to basic and acidic residues; it reads LPRDAVEKES. 2 cysteine pairs are disulfide-bonded: Cys341–Cys409 and Cys356–Cys460. An NTR domain is found at 341-460; the sequence is CPKQYKRSGT…ILSNLSKRKC (120 aa). Asn454 is a glycosylation site (N-linked (GlcNAc...) asparagine).

Interacts with EFEMP2. In terms of tissue distribution, expressed at highest levels in collagen-rich tissues, especially tendon. Also expressed in cornea and sterna.

The protein localises to the secreted. Its function is as follows. Binds to the C-terminal propeptide of type I procollagen and enhances procollagen C-proteinase activity. This chain is Procollagen C-endopeptidase enhancer 1 (Pcolce), found in Rattus norvegicus (Rat).